We begin with the raw amino-acid sequence, 1021 residues long: Solute carrier family 12 member 3 (1021 aa).

Residues 1 to 137 (MAELPTTETP…KNPEEPVRFG (137 aa)) are Cytoplasmic-facing. Residue S43 is modified to Phosphoserine. The residue at position 46 (T46) is a Phosphothreonine; by OXSR1 and STK39. S49 is subject to Phosphoserine. At T50 the chain carries Phosphothreonine. T55 and T60 each carry phosphothreonine; by OXSR1 and STK39. S73 carries the post-translational modification Phosphoserine. Position 91 is a phosphoserine; by OXSR1 and STK39 (S91). Position 124 is a phosphothreonine (T124). Residue S126 is modified to Phosphoserine. Residues 138–167 (WVKGVMIRCMLNIWGVILYLRLPWITAQAG) form a discontinuously helical membrane-spanning segment. Residue L148 participates in Na(+) binding. A polythiazide-binding site is contributed by N149. Residue W151 participates in Na(+) binding. A helical membrane pass occupies residues 168-189 (IVLTWIIILLSVTVTSITGLSI). Topologically, residues 190–220 (SAISTNGKVKSGGTYFLISRSLGPELGGSIG) are cytoplasmic. A helical transmembrane segment spans residues 221–243 (LIFAFANAVGVAMHTVGFAETVR). Polythiazide contacts are provided by N227 and H234. Residues 244–255 (DLLQEYGAPIVD) are Extracellular-facing. Helical transmembrane passes span 256–280 (PIND…AGME) and 281–303 (WESK…YLVG). Residues 304-338 (TLIPPSEDKASKGFFSYRADIFVQNLVPDWRGPDG) lie on the Extracellular side of the membrane. Residues 339-360 (TFFGMFSIFFPSATGILAGANI) form a discontinuously helical membrane-spanning segment. T352 provides a ligand contact to polythiazide. Residues G353, I354, and L355 each coordinate chloride. N359 serves as a coordination point for polythiazide. Over 361 to 371 (SGDLKDPAIAI) the chain is Cytoplasmic. A helical transmembrane segment spans residues 372–393 (PKGTLMAIFWTTISYLAISATI). The Extracellular portion of the chain corresponds to 394–453 (GSCVVRDASGVLNDTVTPGWGACEGLACSYGWNFTECTQQHSCHYGLINYYQTMSMVSGF). The N-linked (GlcNAc...) asparagine glycan is linked to N406. A disulfide bond links C416 and C421. An N-linked (GlcNAc...) asparagine glycan is attached at N426. Cysteines 430 and 436 form a disulfide. Residues 454 to 477 (APLITAGIFGATLSSALACLVSAA) form a helical membrane-spanning segment. Na(+) is bound by residues A464, S467, and S468. At 478–507 (KVFQCLCEDQLYPLIGFFGKGYGKNKEPVR) the chain is on the cytoplasmic side. Residues 508-522 (GYLLAYAIAVAFIII) form a helical membrane-spanning segment. Topologically, residues 523-527 (AELNT) are extracellular. The helical transmembrane segment at 528 to 544 (IAPIISNFFLCSYALIN) threads the bilayer. Position 540 (Y540) interacts with chloride. The Cytoplasmic portion of the chain corresponds to 545-567 (FSCFHASITNSPGWRPSFQYYNK). Helical transmembrane passes span 568-587 (WAAL…LTWW) and 588-599 (AALIAIGVVLFL). The Cytoplasmic portion of the chain corresponds to 600–1021 (LLYVIYKKPE…QENVLTFYCQ (422 aa)). Residues 615–630 (SVQAGSYNLALSYSVG) are scissor helix. Positions 648, 655, 677, 741, 780, and 781 each coordinate ATP.

It belongs to the SLC12A transporter family. As to quaternary structure, homodimer; adopts a domain-swap conformation at the scissor helices connecting the transmembrane domain and C-terminal domain. Interacts with KLHL3. Interacts with IL18R1; this interaction is increased by IL18 treatment. Post-translationally, ubiquitinated; ubiquitination is essential for regulation of endocytosis. The BCR(KLHL3) complex was initially identified as a candidate ubiquitin ligase for SLC12A3. However, it was later shown that it is not the case. Phosphorylated at Thr-46, Thr-55, Thr-60 and Ser-91 by OXSR1/OSR1 and STK39/SPAK downstream of WNK4, promoting its activity. Phosphorylated in response to IL18. As to expression, predominantly expressed in the kidney (at protein level). Localizes to the distal convoluted tubules (at protein level). Not detected in normal aorta, but abundantly expressed in fatty streaks and advanced atherosclerotic lesions (at protein level).

The protein resides in the cell membrane. It is found in the apical cell membrane. The catalysed reaction is chloride(out) + Na(+)(out) = chloride(in) + Na(+)(in). Its activity is regulated as follows. Phosphorylation by OXSR1/OSR1 and STK39/SPAK in kidney distal convoluted tubules downstream of WNK4 promotes its activity. Also activated by OXSR1/OSR1 and STK39/SPAK downstream of WNK3. Target of thiazide diuretics used in the treatment of high blood pressure. Thiazide drugs, such as polythiazide, specifically inhibit SLC12A3/NCC transporter activity by competing with chloride for binding and by locking SLC12A3/NCC in an outward-facing conformation. Its function is as follows. Electroneutral sodium and chloride ion cotransporter, which acts as a key mediator of sodium and chloride reabsorption in kidney distal convoluted tubules. Also acts as a receptor for the pro-inflammatory cytokine IL18, thereby contributing to IL18-induced cytokine production, including IFNG, IL6, IL18 and CCL2. May act either independently of IL18R1, or in a complex with IL18R1. The polypeptide is Solute carrier family 12 member 3 (Homo sapiens (Human)).